The sequence spans 361 residues: Mannose-1-phosphate guanyltransferase (361 aa).

A Phosphothreonine modification is found at T153. K244 participates in a covalent cross-link: Glycyl lysine isopeptide (Lys-Gly) (interchain with G-Cter in ubiquitin).

Belongs to the transferase hexapeptide repeat family.

The protein localises to the cytoplasm. It carries out the reaction alpha-D-mannose 1-phosphate + GTP + H(+) = GDP-alpha-D-mannose + diphosphate. It functions in the pathway nucleotide-sugar biosynthesis; GDP-alpha-D-mannose biosynthesis; GDP-alpha-D-mannose from alpha-D-mannose 1-phosphate (GTP route): step 1/1. Involved in cell wall synthesis where it is required for glycosylation. Involved in cell cycle progression through cell-size checkpoint. This is Mannose-1-phosphate guanyltransferase (PSA1) from Saccharomyces cerevisiae (strain ATCC 204508 / S288c) (Baker's yeast).